The primary structure comprises 290 residues: 33 kDa chaperonin (290 aa).

Intrachain disulfides connect Cys231-Cys233 and Cys264-Cys267.

The protein belongs to the HSP33 family. Under oxidizing conditions two disulfide bonds are formed involving the reactive cysteines. Under reducing conditions zinc is bound to the reactive cysteines and the protein is inactive.

The protein resides in the cytoplasm. Its function is as follows. Redox regulated molecular chaperone. Protects both thermally unfolding and oxidatively damaged proteins from irreversible aggregation. Plays an important role in the bacterial defense system toward oxidative stress. The sequence is that of 33 kDa chaperonin from Photorhabdus laumondii subsp. laumondii (strain DSM 15139 / CIP 105565 / TT01) (Photorhabdus luminescens subsp. laumondii).